Here is a 346-residue protein sequence, read N- to C-terminus: Phosphoribosylformylglycinamidine cyclo-ligase (346 aa).

It belongs to the AIR synthase family.

Its subcellular location is the cytoplasm. It catalyses the reaction 2-formamido-N(1)-(5-O-phospho-beta-D-ribosyl)acetamidine + ATP = 5-amino-1-(5-phospho-beta-D-ribosyl)imidazole + ADP + phosphate + H(+). The protein operates within purine metabolism; IMP biosynthesis via de novo pathway; 5-amino-1-(5-phospho-D-ribosyl)imidazole from N(2)-formyl-N(1)-(5-phospho-D-ribosyl)glycinamide: step 2/2. This is Phosphoribosylformylglycinamidine cyclo-ligase from Geobacillus kaustophilus (strain HTA426).